Here is a 328-residue protein sequence, read N- to C-terminus: Neuronal membrane glycoprotein M6-b (328 aa).

The interval 1–22 is disordered; it reads MKPAMETAAEENTEQSQERKVN. Residues 71–91 traverse the membrane as a helical segment; sequence GGVPYASLVATILCFSGVALF. Residue N113 is glycosylated (N-linked (GlcNAc...) asparagine). 2 helical membrane-spanning segments follow: residues 130-150 and 176-196; these read VIYG…AEGF and FVFL…FSAV. N-linked (GlcNAc...) asparagine glycosylation occurs at N217. A helical membrane pass occupies residues 265–285; sequence FIVACAGAGATVIALIHFLMI. Phosphoserine occurs at positions 318, 320, and 326.

Belongs to the myelin proteolipid protein family. In terms of assembly, interacts with SERT. Widely expressed. In the brain, expressed in neurons and oligodendrocytes.

The protein resides in the membrane. The protein localises to the cell membrane. Functionally, may be involved in neural development. Involved in regulation of osteoblast function and bone formation. Involved in matrix vesicle release by osteoblasts; this function seems to involve maintenance of the actin cytoskeleton. May be involved in cellular trafficking of SERT and thereby in regulation of serotonin uptake. In Mus musculus (Mouse), this protein is Neuronal membrane glycoprotein M6-b (Gpm6b).